Reading from the N-terminus, the 299-residue chain is Probable lipid kinase YegS (299 aa).

The DAGKc domain occupies 2-133 (ANFPASLLIL…IDMARVNDKT (132 aa)). Residues Thr-40, 66–72 (GDGTINE), and Thr-95 each bind ATP. Mg(2+) contacts are provided by Leu-215, Asp-218, and Leu-220. Glu-271 acts as the Proton acceptor in catalysis.

The protein belongs to the diacylglycerol/lipid kinase family. YegS lipid kinase subfamily. Mg(2+) is required as a cofactor. The cofactor is Ca(2+).

The protein resides in the cytoplasm. Probably phosphorylates lipids; the in vivo substrate is unknown. This chain is Probable lipid kinase YegS, found in Salmonella paratyphi A (strain ATCC 9150 / SARB42).